The primary structure comprises 234 residues: Ribonuclease 3 (234 aa).

The region spanning 13–136 (YITLEKALGY…LMAGVYLEAG (124 aa)) is the RNase III domain. Glutamate 49 is a binding site for Mg(2+). Aspartate 53 is a catalytic residue. Residues serine 122 and glutamate 125 each contribute to the Mg(2+) site. The active site involves glutamate 125. In terms of domain architecture, DRBM spans 163–232 (DYKTALQELT…AYQALQKLKG (70 aa)).

It belongs to the ribonuclease III family. Homodimer. It depends on Mg(2+) as a cofactor.

The protein resides in the cytoplasm. It carries out the reaction Endonucleolytic cleavage to 5'-phosphomonoester.. Digests double-stranded RNA. Involved in the processing of primary rRNA transcript to yield the immediate precursors to the large and small rRNAs (23S and 16S). Processes some mRNAs, and tRNAs when they are encoded in the rRNA operon. Processes pre-crRNA and tracrRNA of type II CRISPR loci if present in the organism. The polypeptide is Ribonuclease 3 (Helicobacter acinonychis (strain Sheeba)).